Here is a 497-residue protein sequence, read N- to C-terminus: MVPPPQPSLFQLTFLTGDKPILTLDDEFISSHTKVLLISDASDKIWEVKLDGNRLAGGWEEFAAVNNFSEGNVLVFRHNGEEIFHVAVSSESDDDESDDTDDSESDDESNDTDDSESDDSEDNGEGDSSLVNKEADSSSDCFLRARVTPYSLTKDRLDLSKDFKFMLFDEHNKPCEIYLVNEKGRKWTLRLSRNISSGAFYITRGWANFCSANGLIRGDFCYFKLSESGERPVLLLCSHESGNGHEDKEEEEECPEADTLKICSVGGCSNEKNTPSRFLTQKFTPSRFKTGQLYISMLSSGGLRESGIKKTGEIILLDNDGRKWPSYLNKTGQPGGEWCYIRKGWREMCEANGVEVNDSFVLELICEAANPIFKLHSKIRNKGKGNIVTSKKRALHARTVERTPGVEIDGERGSKRGCTRVSNRSNTYLKGKQPESCSVSDQVANVRQSVLDTLNTIRHFKAELKTRERNLEASLLELDALGERILGISKILNNNLA.

DNA-binding regions (TF-B3) lie at residues 7-92 (PSLF…SSES), 142-239 (FLRA…LCSH), and 278-379 (FLTQ…HSKI). Residues 87–135 (AVSSESDDDESDDTDDSESDDESNDTDDSESDDSEDNGEGDSSLVNKEA) are disordered. The segment covering 91 to 125 (ESDDDESDDTDDSESDDESNDTDDSESDDSEDNGE) has biased composition (acidic residues).

Specifically expressed in the reproductive meristem.

It is found in the nucleus. May play a role in flower development. The protein is B3 domain-containing protein REM1 (REM1) of Brassica oleracea var. botrytis (Cauliflower).